Consider the following 113-residue polypeptide: Large ribosomal subunit protein uL24 (113 aa).

This sequence belongs to the universal ribosomal protein uL24 family. Part of the 50S ribosomal subunit.

One of two assembly initiator proteins, it binds directly to the 5'-end of the 23S rRNA, where it nucleates assembly of the 50S subunit. In terms of biological role, one of the proteins that surrounds the polypeptide exit tunnel on the outside of the subunit. The protein is Large ribosomal subunit protein uL24 of Rickettsia prowazekii (strain Madrid E).